We begin with the raw amino-acid sequence, 310 residues long: 2-methoxy-6-polyprenyl-1,4-benzoquinol methylase, mitochondrial (310 aa).

Residues Met-1 to Ser-6 constitute a mitochondrion transit peptide. Residues Thr-99, Asp-154, and Asp-182–Ala-183 each bind S-adenosyl-L-methionine.

It belongs to the class I-like SAM-binding methyltransferase superfamily. MenG/UbiE family. In terms of assembly, component of a multi-subunit COQ enzyme complex, composed of at least coq3, coq4, coq5, coq6, coq7 and coq9.

The protein localises to the mitochondrion inner membrane. It catalyses the reaction a 2-methoxy-6-(all-trans-polyprenyl)benzene-1,4-diol + S-adenosyl-L-methionine = a 5-methoxy-2-methyl-3-(all-trans-polyprenyl)benzene-1,4-diol + S-adenosyl-L-homocysteine + H(+). The protein operates within cofactor biosynthesis; ubiquinone biosynthesis. Functionally, methyltransferase required for the conversion of 2-polyprenyl-6-methoxy-1,4-benzoquinol (DDMQH2) to 2-polyprenyl-3-methyl-6-methoxy-1,4-benzoquinol (DMQH2). This is 2-methoxy-6-polyprenyl-1,4-benzoquinol methylase, mitochondrial from Xenopus laevis (African clawed frog).